Consider the following 462-residue polypeptide: Asparagine--tRNA ligase (462 aa).

This sequence belongs to the class-II aminoacyl-tRNA synthetase family. As to quaternary structure, homodimer.

It localises to the cytoplasm. It catalyses the reaction tRNA(Asn) + L-asparagine + ATP = L-asparaginyl-tRNA(Asn) + AMP + diphosphate + H(+). The polypeptide is Asparagine--tRNA ligase (Borreliella burgdorferi (strain ATCC 35210 / DSM 4680 / CIP 102532 / B31) (Borrelia burgdorferi)).